Here is a 425-residue protein sequence, read N- to C-terminus: Endoplasmic reticulum junction formation protein lunapark (425 aa).

A lipid anchor (N-myristoyl glycine) is attached at Gly2. Residues 2 to 45 (GGLFSRWRAKPSTVEVLENIDKEIQALEEFREKNQRLQKLWVGR) lie on the Cytoplasmic side of the membrane. The stretch at 15 to 41 (VEVLENIDKEIQALEEFREKNQRLQKL) forms a coiled coil. The helical transmembrane segment at 46–66 (LIIYSSILYLFTCLIVYLWYL) threads the bilayer. Topologically, residues 67-77 (PDEFTARLVMT) are lumenal. Residues 78–98 (LPFFAFPLIIWTLRTVLIFFF) form a helical membrane-spanning segment. The Cytoplasmic portion of the chain corresponds to 99-425 (SKRTERNNEA…EPSEESLVTK (327 aa)). Residues 101–128 (RTERNNEALDDLKSQKKKILEEVMEKET) adopt a coiled-coil conformation. Phosphoserine is present on residues Ser114, Ser153, Ser177, Ser182, and Ser194. The segment at 144 to 242 (KKAKEFEPPS…HPPGPPLARP (99 aa)) is disordered. Positions 186–195 (GPPPQGPVSP) are enriched in pro residues. Residue Thr211 is modified to Phosphothreonine. Ser222 bears the Phosphoserine mark. A C4-type; plays a role in ER morphology zinc finger spans residues 271-296 (CQQCFSHNGMALKEEFEYIAFRCAYC). Residues Ser316, Ser348, and Ser380 each carry the phosphoserine modification. The segment at 320–425 (RQAVEGSSST…EPSEESLVTK (106 aa)) is disordered. A compositionally biased stretch (acidic residues) spans 384–398 (EPAENQEETENEETS). Ser411 carries the phosphoserine modification.

It belongs to the lunapark family. In terms of assembly, homodimer; homodimerization requires the C4-type zinc finger motif and decreases during mitosis in a phosphorylation-dependent manner. In terms of processing, myristoylated; myristoylation is necessary for the endoplasmic reticulum (ER) three-way ER tubular junction formation, but is not required neither for membrane translocation, membrane topology formation, nor for the specific localization to ER membranes. Post-translationally, phosphorylated. Phosphorylation occurs at Ser-177, Ser-182, Ser-222, Ser-316 and Ser-380 during interphase. Phosphorylation occurs at Ser-114, Ser-153, Ser-194, Thr-211 and Ser-348 during mitosis; these phosphorylations reduce both its homodimerization and the ER three-way tubular junction formation. Subject to proteasomal degradation following phosphorylation during mitosis. As to expression, expressed in most tissues at basal level, with reinforcement in distal limb buds, genital bud, and in parts of the central nervous system.

Its subcellular location is the endoplasmic reticulum membrane. In terms of biological role, endoplasmic reticulum (ER)-shaping membrane protein that plays a role in determining ER morphology. Involved in the stabilization of nascent three-way ER tubular junctions within the ER network. May also play a role as a curvature-stabilizing protein within three-way ER tubular junction network. May be involved in limb and central nervous system development. The sequence is that of Endoplasmic reticulum junction formation protein lunapark from Mus musculus (Mouse).